Consider the following 361-residue polypeptide: Histidinol-phosphate aminotransferase (361 aa).

Lys219 carries the N6-(pyridoxal phosphate)lysine modification.

This sequence belongs to the class-II pyridoxal-phosphate-dependent aminotransferase family. Histidinol-phosphate aminotransferase subfamily. In terms of assembly, homodimer. It depends on pyridoxal 5'-phosphate as a cofactor.

The enzyme catalyses L-histidinol phosphate + 2-oxoglutarate = 3-(imidazol-4-yl)-2-oxopropyl phosphate + L-glutamate. It functions in the pathway amino-acid biosynthesis; L-histidine biosynthesis; L-histidine from 5-phospho-alpha-D-ribose 1-diphosphate: step 7/9. This is Histidinol-phosphate aminotransferase from Acinetobacter baumannii (strain ACICU).